The sequence spans 525 residues: Probable protein kinase UbiB (525 aa).

The region spanning 118–500 (EFERVPVASA…QRRTNRLLQA (383 aa)) is the Protein kinase domain. Residues 124–132 (VASASIAQV) and Lys-150 contribute to the ATP site. The active-site Proton acceptor is the Asp-285. Residues 501-521 (LLVFGLAVGAGAVIARVLIVL) form a helical membrane-spanning segment.

This sequence belongs to the ABC1 family. UbiB subfamily.

The protein localises to the cell inner membrane. It functions in the pathway cofactor biosynthesis; ubiquinone biosynthesis [regulation]. Is probably a protein kinase regulator of UbiI activity which is involved in aerobic coenzyme Q (ubiquinone) biosynthesis. This Burkholderia mallei (strain SAVP1) protein is Probable protein kinase UbiB.